The following is a 167-amino-acid chain: MATKILIFLSFVALSSAGFVWVDDDNNSFPKLRQLYVPPLPQPPPLPNIPGLPQPPPLPQPPPLFGFDFSPILPIPPIPPIPPILPTPPFINIPAPEDIKNIKPKPGQFFNGISVKSRSGYALDKDGNRVKTGGTAVLINDNGEVNETIVGDNPPKFEESRKESSSN.

Residues Met-1–Ala-17 form the signal peptide. An N-linked (GlcNAc...) asparagine glycan is attached at Asn-26. 5 tandem repeats follow at residues Pro-38 to Leu-46, Pro-56 to Leu-64, Pro-76 to Ile-78, Pro-79 to Ile-81, and Pro-82 to Ile-84. Residues Val-145 to Asn-167 are disordered. N-linked (GlcNAc...) asparagine glycosylation is present at Asn-146. Positions Pro-155–Asn-167 are enriched in basic and acidic residues.

As to expression, produced by both the posterior (PSG) and middle (MSG) sections of silk glands.

The protein localises to the secreted. The sequence is that of Seroin from Galleria mellonella (Greater wax moth).